A 216-amino-acid chain; its full sequence is MGESKQEHLIVGVSPFNPRFTPEWLSSAFQWGAERFNTVDVLHPGEISMSLLTSTGTPLGRAKRKVRQQCNRDMRNVEHALEISGIKLGRGKPVLISDYLQTQSYQCRRRSVIAEFQNNQIFQDACRAMSRAACQSRLRVTNVNIEPDIETAVKYIFDELPAYTHCSDLFEYETAALGYPTEWPIGKLIESGLTSLERDPNSSFIVIDFEKELIDD.

Serine 14 acts as the Nucleophile in catalysis. Residues asparagine 17, 155 to 159 (YIFDE), and tyrosine 179 each bind substrate.

Belongs to the CDPS family.

It catalyses the reaction 2 L-leucyl-tRNA(Leu) = cyclo(L-leucyl-L-leucyl) + 2 tRNA(Leu) + 2 H(+). In terms of biological role, it uses activated amino acids in the form of aminoacyl-tRNAs (aa-tRNAs) as substrates to catalyze the ATP-independent formation of cyclodipeptides which are intermediates in diketopiperazine (DKP) biosynthetic pathways. Catalyzes the formation of cyclo(L-Leu-L-Leu) (cLL) from L-leucyl-tRNA(Leu). Can incorporate various nonpolar residues, such as L-leucine and L-methionine, into cyclodipeptides. The protein is Cyclo(L-leucyl-L-leucyl) synthase of Corynebacterium jeikeium (strain K411).